A 130-amino-acid chain; its full sequence is Small ribosomal subunit protein uS8 (130 aa).

Belongs to the universal ribosomal protein uS8 family. Part of the 30S ribosomal subunit.

One of the primary rRNA binding proteins, it binds directly to 16S rRNA central domain where it helps coordinate assembly of the platform of the 30S subunit. This Thermococcus sibiricus (strain DSM 12597 / MM 739) protein is Small ribosomal subunit protein uS8.